The sequence spans 240 residues: Prolactin-8A6 (240 aa).

An N-terminal signal peptide occupies residues 1-30; sequence MALLLSQPHFSGPLLLLVVSNLLLWEKAAS. 3 disulfide bridges follow: cysteine 34–cysteine 41, cysteine 101–cysteine 216, and cysteine 233–cysteine 240. N-linked (GlcNAc...) asparagine glycosylation occurs at asparagine 212.

This sequence belongs to the somatotropin/prolactin family. In terms of tissue distribution, expressed specifically in the spongiotrophoblast and trophoblast giant cells from the junctional zone of the chorioallantoic placenta.

The protein resides in the secreted. This chain is Prolactin-8A6 (Prl8a6), found in Mus musculus (Mouse).